We begin with the raw amino-acid sequence, 477 residues long: Serine/threonine-protein kinase prp4 (477 aa).

A disordered region spans residues 25–123 (KYQQTGNGHS…SPSVKRQNTG (99 aa)). Basic and acidic residues predominate over residues 38–47 (IPEKKLKEDV). Residues 74-86 (EGSNSNTKLDVTN) are compositionally biased toward polar residues. The segment covering 87 to 98 (STTSDSPSIKSS) has biased composition (low complexity). At serine 92 the chain carries Phosphoserine. The segment covering 113-123 (PSPSVKRQNTG) has biased composition (polar residues). Positions 159-477 (YIVQSNLGKG…ALKHPFFIKK (319 aa)) constitute a Protein kinase domain. ATP contacts are provided by residues 165 to 173 (LGKGMFSTV) and lysine 188. Catalysis depends on aspartate 286, which acts as the Proton acceptor. Tyrosine 320 carries the post-translational modification Phosphotyrosine.

It belongs to the protein kinase superfamily. CMGC Ser/Thr protein kinase family.

The catalysed reaction is L-seryl-[protein] + ATP = O-phospho-L-seryl-[protein] + ADP + H(+). It carries out the reaction L-threonyl-[protein] + ATP = O-phospho-L-threonyl-[protein] + ADP + H(+). In terms of biological role, has a role in pre-mRNA splicing and is essential for growth. Phosphorylates srp1. The chain is Serine/threonine-protein kinase prp4 (prp4) from Schizosaccharomyces pombe (strain 972 / ATCC 24843) (Fission yeast).